We begin with the raw amino-acid sequence, 93 residues long: MKYITAISMLATAALTAATPLNGVEARWGSGGGGGGSTCDNNQQQVCCASVLSLICLVDVLGGNCNGGSYCCDNGASVGGLINLNLLNCVQIL.

The signal sequence occupies residues 1–26 (MKYITAISMLATAALTAATPLNGVEA). Disulfide bonds link cysteine 39-cysteine 71, cysteine 47-cysteine 65, cysteine 48-cysteine 56, and cysteine 72-cysteine 89.

Belongs to the fungal hydrophobin family. Self-assembles to form functional amyloid fibrils called rodlets. Self-assembly into fibrillar rodlets occurs spontaneously at hydrophobic:hydrophilic interfaces and the rodlets further associate laterally to form amphipathic monolayers.

The protein localises to the secreted. Its subcellular location is the cell wall. In terms of biological role, aerial growth, conidiation, and dispersal of filamentous fungi in the environment rely upon a capability of their secreting small amphipathic proteins called hydrophobins (HPBs) with low sequence identity. Class I can self-assemble into an outermost layer of rodlet bundles on aerial cell surfaces, conferring cellular hydrophobicity that supports fungal growth, development and dispersal; whereas Class II form highly ordered films at water-air interfaces through intermolecular interactions but contribute nothing to the rodlet structure. SSP1 is a class I hydrophobin that acts as an effector in the ericoid mycorrhizal interaction with Vaccinium myrtillus. May enhance attachment of the fungus to the root surface and protect the fungal hypha from plant defense compounds. The sequence is that of Class I hydrophobin SSP1 from Oidiodendron maius (strain Zn).